A 157-amino-acid polypeptide reads, in one-letter code: MEALRRAHEVALRLLLCRPWASRAAARPKPSASEVLTRHLLQRRLPHWTSFCVPYSAVRNDQFGLSHFNWPVQGANYHVLRTGCFPFIKYHCSKAPWQDLARQNRFFTALKVVNLGIPTLLYGLGSWLFARVTETVHTSYGPITVYFLNKEDEGAMY.

The first 26 residues, 1 to 26 (MEALRRAHEVALRLLLCRPWASRAAA), serve as a signal peptide directing secretion.

The protein localises to the secreted. This is an uncharacterized protein from Homo sapiens (Human).